The chain runs to 141 residues: Nucleoside diphosphate kinase (141 aa).

The ATP site is built by K11, F59, R87, T93, R104, and N114. H117 acts as the Pros-phosphohistidine intermediate in catalysis.

The protein belongs to the NDK family. Homotetramer. The cofactor is Mg(2+).

It is found in the cytoplasm. It catalyses the reaction a 2'-deoxyribonucleoside 5'-diphosphate + ATP = a 2'-deoxyribonucleoside 5'-triphosphate + ADP. The catalysed reaction is a ribonucleoside 5'-diphosphate + ATP = a ribonucleoside 5'-triphosphate + ADP. Functionally, major role in the synthesis of nucleoside triphosphates other than ATP. The ATP gamma phosphate is transferred to the NDP beta phosphate via a ping-pong mechanism, using a phosphorylated active-site intermediate. The polypeptide is Nucleoside diphosphate kinase (Cupriavidus metallidurans (strain ATCC 43123 / DSM 2839 / NBRC 102507 / CH34) (Ralstonia metallidurans)).